We begin with the raw amino-acid sequence, 467 residues long: UTP--glucose-1-phosphate uridylyltransferase (467 aa).

UTP contacts are provided by residues 83-86, Lys-97, Gln-160, and Gly-189; that span reads LNGG. 85–86 provides a ligand contact to substrate; the sequence is GG. Substrate contacts are provided by residues His-190 and 218-220; that span reads NSD. Positions 220 and 358 each coordinate UTP.

This sequence belongs to the UDPGP type 1 family.

The protein resides in the cytoplasm. It carries out the reaction alpha-D-glucose 1-phosphate + UTP + H(+) = UDP-alpha-D-glucose + diphosphate. In terms of biological role, plays a central role as a glucosyl donor in cellular metabolic pathways. The protein is UTP--glucose-1-phosphate uridylyltransferase (UGPA) of Musa acuminata (Banana).